We begin with the raw amino-acid sequence, 857 residues long: Major vault protein (857 aa).

8 MVP repeats span residues 18–60 (PYYY…ITIP), 62–122 (RHYC…KVVQ), 123–174 (ANAA…TIIR), 175–227 (PNQA…YVLT), 228–282 (EKNA…NTLT), 284–332 (RQYC…FILG), 333–387 (EDEG…IPLD), and 388–441 (ENEG…VAER). A disordered region spans residues 434–453 (AKDPVAERSDRRGDRAAPRA). Basic and acidic residues predominate over residues 437–453 (PVAERSDRRGDRAAPRA). One can recognise an IQ domain in the interval 665-694 (ARHEAERLEQEARGRLERQKIMDEAEAEKS).

As to quaternary structure, the vault ribonucleoprotein particle is a huge (400 A x 670 A) cage structure of 12.9 MDa. It consists of a dimer of half-vaults, with each half-vault comprising 39 identical major vault protein (MVP) chains, PARP4 and one or more vault RNAs (vRNAs). Expressed in embryos, tube feet and coelomocytes (at protein level). Not expressed in sperm cells (at protein level).

It is found in the cytoplasm. It localises to the nucleus. Its function is as follows. Required for normal vault structure. Vaults are multi-subunit structures that may act as scaffolds for proteins involved in signal transduction. Vaults may also play a role in nucleo-cytoplasmic transport. The sequence is that of Major vault protein from Strongylocentrotus purpuratus (Purple sea urchin).